Reading from the N-terminus, the 787-residue chain is Protein translocase subunit SecA (787 aa).

ATP-binding positions include glutamine 85, 103 to 107 (GEGKT), and aspartate 492.

It belongs to the SecA family. Monomer and homodimer. Part of the essential Sec protein translocation apparatus which comprises SecA, SecYEG and auxiliary proteins SecDF. Other proteins may also be involved.

The protein resides in the cell membrane. It localises to the cytoplasm. It carries out the reaction ATP + H2O + cellular proteinSide 1 = ADP + phosphate + cellular proteinSide 2.. Its function is as follows. Part of the Sec protein translocase complex. Interacts with the SecYEG preprotein conducting channel. Has a central role in coupling the hydrolysis of ATP to the transfer of proteins into and across the cell membrane, serving as an ATP-driven molecular motor driving the stepwise translocation of polypeptide chains across the membrane. The polypeptide is Protein translocase subunit SecA (Limosilactobacillus reuteri (strain DSM 20016) (Lactobacillus reuteri)).